Here is a 429-residue protein sequence, read N- to C-terminus: MMSHPCVSLLGVPVLNPALVPHLAQGQVLLVSDPSPNTDPAKYSESTSATRHQMKGEDAQPQEMASTSFPRASGPSPEFRQHGDSDGKRGSPQNLPIEHHFACKECGDTFRLKVLLVQHQRVHSEEKGWECGDCGKVFRGVAEFNEHRKSHVAAEPQPGPSRALENAAEKREQMEREAKPFECEECGKRFKKNAGLSQHLRVHSREKPFDCEECGRSFKVNTHLFRHQKLHTSEKPFACKACSRDFLDRQELLKHQRMHTGHLPFDCDDCGKSFRGVNGLAEHQRIHSGAKPYGCPHCGKLFRRSSELTKHRRIHTGEKPYACGQCGKAFRQSSSLLEHARIHSGERPYACGECGKAFRGPSDLIKHRRIHSGLKPYECDKCGKAFRRSSGLSRHRRIHSGARRCECSQCGRVFKRRSALQKHQPTHHE.

The tract at residues 31–95 (VSDPSPNTDP…DGKRGSPQNL (65 aa)) is disordered. The segment covering 34 to 51 (PSPNTDPAKYSESTSATR) has biased composition (polar residues). S76 is modified (phosphoserine). The segment covering 79–89 (FRQHGDSDGKR) has biased composition (basic and acidic residues). 2 consecutive C2H2-type zinc fingers follow at residues 101–123 (FACKECGDTFRLKVLLVQHQRVH) and 129–151 (WECGDCGKVFRGVAEFNEHRKSH). A disordered region spans residues 149–176 (KSHVAAEPQPGPSRALENAAEKREQMER). The span at 167–176 (AAEKREQMER) shows a compositional bias: basic and acidic residues. 9 consecutive C2H2-type zinc fingers follow at residues 181 to 203 (FECEECGKRFKKNAGLSQHLRVH), 209 to 231 (FDCEECGRSFKVNTHLFRHQKLH), 237 to 259 (FACKACSRDFLDRQELLKHQRMH), 265 to 287 (FDCDDCGKSFRGVNGLAEHQRIH), 293 to 315 (YGCPHCGKLFRRSSELTKHRRIH), 321 to 343 (YACGQCGKAFRQSSSLLEHARIH), 349 to 371 (YACGECGKAFRGPSDLIKHRRIH), 377 to 399 (YECDKCGKAFRRSSGLSRHRRIH), and 405 to 427 (CECSQCGRVFKRRSALQKHQPTH).

Belongs to the krueppel C2H2-type zinc-finger protein family.

The protein localises to the nucleus. Functionally, may be involved in transcriptional regulation. This chain is Zinc finger protein 275 (ZNF275), found in Homo sapiens (Human).